The primary structure comprises 428 residues: Enolase (428 aa).

Glutamine 163 is a binding site for (2R)-2-phosphoglycerate. The Proton donor role is filled by glutamate 205. Mg(2+) is bound by residues aspartate 242, glutamate 285, and aspartate 312. (2R)-2-phosphoglycerate-binding residues include lysine 337, arginine 366, serine 367, and lysine 388. Lysine 337 serves as the catalytic Proton acceptor.

This sequence belongs to the enolase family. Requires Mg(2+) as cofactor.

Its subcellular location is the cytoplasm. The protein localises to the secreted. It is found in the cell surface. The catalysed reaction is (2R)-2-phosphoglycerate = phosphoenolpyruvate + H2O. Its pathway is carbohydrate degradation; glycolysis; pyruvate from D-glyceraldehyde 3-phosphate: step 4/5. In terms of biological role, catalyzes the reversible conversion of 2-phosphoglycerate (2-PG) into phosphoenolpyruvate (PEP). It is essential for the degradation of carbohydrates via glycolysis. The sequence is that of Enolase from Neisseria meningitidis serogroup B (strain ATCC BAA-335 / MC58).